Here is a 365-residue protein sequence, read N- to C-terminus: tRNA-specific 2-thiouridylase MnmA (365 aa).

ATP is bound by residues 14 to 21 (AMSGGVDS) and Leu40. Catalysis depends on Cys108, which acts as the Nucleophile. An intrachain disulfide couples Cys108 to Cys204. Gly132 lines the ATP pocket. The tract at residues 154-156 (KDQ) is interaction with tRNA. The Cysteine persulfide intermediate role is filled by Cys204.

Belongs to the MnmA/TRMU family.

The protein resides in the cytoplasm. It carries out the reaction S-sulfanyl-L-cysteinyl-[protein] + uridine(34) in tRNA + AH2 + ATP = 2-thiouridine(34) in tRNA + L-cysteinyl-[protein] + A + AMP + diphosphate + H(+). Catalyzes the 2-thiolation of uridine at the wobble position (U34) of tRNA, leading to the formation of s(2)U34. The polypeptide is tRNA-specific 2-thiouridylase MnmA (Rickettsia akari (strain Hartford)).